A 219-amino-acid chain; its full sequence is Phosphatidylinositol phosphate synthase (219 aa).

Residue 29 to 32 (NQLT) coordinates a CDP-1,2-diacyl-sn-glycerol. A run of 2 helical transmembrane segments spans residues 31–47 (LTLV…LLLI) and 53–72 (IWAA…DGTV). Residues aspartate 66 and aspartate 69 each coordinate Mg(2+). Positions 70, 74, and 80 each coordinate a CDP-1,2-diacyl-sn-glycerol. Mg(2+) is bound by residues aspartate 87 and aspartate 91. The active-site Proton acceptor is the aspartate 91. Helical transmembrane passes span 93–110 (ITDG…VYSY), 116–133 (LVAA…ISYV), 154–171 (RLIV…GVPY), and 177–194 (LWAL…RLVM).

Belongs to the CDP-alcohol phosphatidyltransferase class-I family. As to quaternary structure, homodimer. Requires Mg(2+) as cofactor.

Its subcellular location is the cell membrane. The enzyme catalyses a CDP-1,2-diacyl-sn-glycerol + 1D-myo-inositol 3-phosphate = a 1,2-diacyl-sn-glycero-3-phospho-(1D-myo-inositol-3-phosphate) + CMP + H(+). It carries out the reaction 1,2-di-(9Z-octadecenoyl)-sn-glycero-3-cytidine-5'-diphosphate + 1D-myo-inositol 3-phosphate = 1,2-di-(9Z-octadecenoyl)-sn-glycero-3-phospho-(1D-myo-inositol-3-phosphate) + CMP + H(+). It participates in phospholipid metabolism; phosphatidylinositol phosphate biosynthesis. Catalyzes the conjugation of the 1'-hydroxyl group of D-myo-inositol-3-phosphate (also named L-myo-inositol-1-phosphate) with a lipid tail of cytidine diphosphate diacylglycerol (CDP-DAG), forming phosphatidylinositol phosphate (PIP) and CMP. PIP is a precursor of phosphatidylinositol (PI) which is an essential lipid required for cell wall formation. The protein is Phosphatidylinositol phosphate synthase of Corynebacterium glutamicum (strain ATCC 13032 / DSM 20300 / JCM 1318 / BCRC 11384 / CCUG 27702 / LMG 3730 / NBRC 12168 / NCIMB 10025 / NRRL B-2784 / 534).